Reading from the N-terminus, the 444-residue chain is Pineal opsin (444 aa).

The segment at Met1–Ser20 is disordered. The Extracellular segment spans residues Met1–Asn46. Low complexity predominate over residues Ser7–Ser20. The N-linked (GlcNAc...) asparagine glycan is linked to Asn25. The chain crosses the membrane as a helical span at residues Phe47–Val71. At Thr72–Asn83 the chain is on the cytoplasmic side. Residues Tyr84 to Asn108 form a helical membrane-spanning segment. Residues Ile109–Glu123 are Extracellular-facing. Residues Cys120 and Cys197 are joined by a disulfide bond. The chain crosses the membrane as a helical span at residues Gly124–Phe143. The Cytoplasmic segment spans residues Glu144 to His162. A helical membrane pass occupies residues Ala163–Ser186. Residues Ser187–Thr210 lie on the Extracellular side of the membrane. A helical membrane pass occupies residues Phe211 to Leu238. At Lys239–Arg260 the chain is on the cytoplasmic side. Residues Met261 to Thr284 traverse the membrane as a helical segment. Residues Ala285–Asp292 lie on the Extracellular side of the membrane. A helical transmembrane segment spans residues Pro293–Met317. Lys304 is modified (N6-(retinylidene)lysine). Residues Asn318–Val444 lie on the Cytoplasmic side of the membrane. Residue Cys331 is the site of S-palmitoyl cysteine attachment. Disordered regions lie at residues Gln341–Gly360 and Glu388–Thr420. The span at Gln409–Gly419 shows a compositional bias: low complexity.

It belongs to the G-protein coupled receptor 1 family. Opsin subfamily. Post-translationally, phosphorylated on some or all of the serine and threonine residues present in the C-terminal region. Pineal gland.

The protein resides in the membrane. The protein is Pineal opsin of Petromyzon marinus (Sea lamprey).